Consider the following 96-residue polypeptide: uncharacterized protein (96 aa).

The protein resides in the mitochondrion. This is an uncharacterized protein from Saccharomyces cerevisiae (strain ATCC 204508 / S288c) (Baker's yeast).